Consider the following 710-residue polypeptide: Dynein axonemal assembly factor 3 homolog (710 aa).

The segment at 403-487 is disordered; sequence GAEAGAGAGP…DSDPAAAAST (85 aa). The segment covering 404 to 416 has biased composition (gly residues); sequence AEAGAGAGPGGEA. Over residues 417–438 the composition is skewed to low complexity; sequence AAGASSSSGKEEAAAAAAAGKE. The span at 453–462 shows a compositional bias: gly residues; that stretch reads SGSGAPGAGT. A compositionally biased stretch (low complexity) spans 478-487; sequence DSDPAAAAST.

It belongs to the DNAAF3 family.

It localises to the cytoplasm. Functionally, required for the assembly of axonemal inner and outer dynein arms. Involved in preassembly of dyneins into complexes before their transport into cilia. The polypeptide is Dynein axonemal assembly factor 3 homolog (DAB1) (Chlamydomonas reinhardtii (Chlamydomonas smithii)).